The primary structure comprises 156 residues: Cyclin-dependent kinase inhibitor 2A (156 aa).

An N-acetylmethionine modification is found at Met1. Phosphoserine is present on residues Ser7 and Ser8. ANK repeat units lie at residues 11-40, 44-72, 77-106, and 110-139; these read PSAD…LPNA, YGRR…EPNC, TLTR…RLDV, and WGRL…GTRG. Phosphoserine is present on residues Ser140 and Ser152.

It belongs to the CDKN2 cyclin-dependent kinase inhibitor family. Heterodimer with CDK4 or CDK6. Predominant p16 complexes contained CDK6. Interacts with CDK4 (both 'T-172'-phosphorylated and non-phosphorylated forms); the interaction inhibits cyclin D-CDK4 kinase activity. Interacts with ISCO2. Post-translationally, phosphorylation seems to increase interaction with CDK4. In terms of tissue distribution, widely expressed but not detected in brain or skeletal muscle. Isoform 3 is pancreas-specific.

It is found in the cytoplasm. Its subcellular location is the nucleus. Its function is as follows. Acts as a negative regulator of the proliferation of normal cells by interacting strongly with CDK4 and CDK6. This inhibits their ability to interact with cyclins D and to phosphorylate the retinoblastoma protein. In Homo sapiens (Human), this protein is Cyclin-dependent kinase inhibitor 2A.